Consider the following 604-residue polypeptide: Serine/threonine-protein kinase A-Raf (604 aa).

The RBD domain occupies 19 to 91; that stretch reads GTVKVYLPNK…DGEELIVEVL (73 aa). A Phorbol-ester/DAG-type zinc finger spans residues 98–144; the sequence is MHNFVRKTFFSLAFCDFCLKFLFHGFRCQTCGYKFHQHCSSKVPTVC. Zn(2+) is bound by residues H99, C112, C115, C125, C128, H133, C136, and C144. 2 positions are modified to phosphoserine: S157 and S162. Disordered stretches follow at residues 178–222 and 241–287; these read ELLT…HMVS and TDAA…DEKK. Residue T181 is modified to Phosphothreonine. At S186 the chain carries Phosphoserine. The span at 210 to 222 shows a compositional bias: polar residues; sequence IRSTSTPNVHMVS. The span at 252–265 shows a compositional bias: low complexity; the sequence is PRGSPSPASVSSGR. A phosphoserine mark is found at S255 and S267. Over residues 272–287 the composition is skewed to basic and acidic residues; sequence LPAEQRERKSLADEKK. The Protein kinase domain occupies 308–568; sequence VQLLKRIGTG…PQILATIELL (261 aa). ATP contacts are provided by residues 314-322 and K334; that span reads IGTGSFGTV. Residue T316 is modified to Phosphothreonine. D427 acts as the Proton acceptor in catalysis.

It belongs to the protein kinase superfamily. TKL Ser/Thr protein kinase family. RAF subfamily. As to quaternary structure, interacts with TH1L/NELFD. Zn(2+) serves as cofactor. Dephosphorylation by the SHOC2-MRAS-PP1c (SMP) complex consisting of SHOC2, GTP-bound M-Ras/MRAS and the catalytic subunit of protein phosphatase 1 (PPP1CA, PPP1CB or PPP1CC); this relieves inactivation and stimulates kinase activity.

It carries out the reaction L-seryl-[protein] + ATP = O-phospho-L-seryl-[protein] + ADP + H(+). The catalysed reaction is L-threonyl-[protein] + ATP = O-phospho-L-threonyl-[protein] + ADP + H(+). Involved in the transduction of mitogenic signals from the cell membrane to the nucleus. May also regulate the TOR signaling cascade. Phosphorylates PFKFB2. The sequence is that of Serine/threonine-protein kinase A-Raf (Araf) from Rattus norvegicus (Rat).